Here is a 241-residue protein sequence, read N- to C-terminus: Eukaryotic translation initiation factor 3 subunit J (241 aa).

The segment at methionine 1–glutamate 94 is disordered. Acidic residues predominate over residues glycine 26–lysine 45. Residues lysine 61–threonine 118 adopt a coiled-coil conformation. The span at aspartate 66 to glutamate 89 shows a compositional bias: basic and acidic residues.

Belongs to the eIF-3 subunit J family. Component of the eukaryotic translation initiation factor 3 (eIF-3) complex.

The protein resides in the cytoplasm. Component of the eukaryotic translation initiation factor 3 (eIF-3) complex, which is involved in protein synthesis of a specialized repertoire of mRNAs and, together with other initiation factors, stimulates binding of mRNA and methionyl-tRNAi to the 40S ribosome. The eIF-3 complex specifically targets and initiates translation of a subset of mRNAs involved in cell proliferation. This chain is Eukaryotic translation initiation factor 3 subunit J, found in Bombyx mori (Silk moth).